The chain runs to 327 residues: Golgi to ER traffic protein 4 homolog (327 aa).

Alanine 2 is modified (N-acetylalanine). Serine 12 carries the post-translational modification Phosphoserine. The tract at residues 195–271 (FVAQAVLQFL…YQPSLRRDPM (77 aa)) is interacts with BAG6. The disordered stretch occupies residues 307–327 (GSSEQEDGEESPSDGSPIELD).

It belongs to the GET4 family. Component of the BAG6/BAT3 complex, at least composed of BAG6, UBL4A and GET4/TRC35. Interacts with BAG6; the interaction is direct and localizes BAG6 to the cytosol. Interacts with GET3. In terms of processing, ubiquitinated by RNF12, leading to proteasomal degradation. When unassembled from BAG6; ubiquitinylation is modulated by BAG6 quality control role and effectuated by RNF126.

Its subcellular location is the cytoplasm. It is found in the cytosol. As part of a cytosolic protein quality control complex, the BAG6/BAT3 complex, maintains misfolded and hydrophobic patches-containing proteins in a soluble state and participates in their proper delivery to the endoplasmic reticulum or alternatively can promote their sorting to the proteasome where they undergo degradation. The BAG6/BAT3 complex is involved in the post-translational delivery of tail-anchored/type II transmembrane proteins to the endoplasmic reticulum membrane. Recruited to ribosomes, it interacts with the transmembrane region of newly synthesized tail-anchored proteins and together with SGTA and ASNA1 mediates their delivery to the endoplasmic reticulum. Client proteins that cannot be properly delivered to the endoplasmic reticulum are ubiquitinated and sorted to the proteasome. Similarly, the BAG6/BAT3 complex also functions as a sorting platform for proteins of the secretory pathway that are mislocalized to the cytosol either delivering them to the proteasome for degradation or to the endoplasmic reticulum. The BAG6/BAT3 complex also plays a role in the endoplasmic reticulum-associated degradation (ERAD), a quality control mechanism that eliminates unwanted proteins of the endoplasmic reticulum through their retrotranslocation to the cytosol and their targeting to the proteasome. It maintains these retrotranslocated proteins in an unfolded yet soluble state condition in the cytosol to ensure their proper delivery to the proteasome. In Homo sapiens (Human), this protein is Golgi to ER traffic protein 4 homolog.